Reading from the N-terminus, the 312-residue chain is Acetylglutamate kinase (312 aa).

Substrate is bound by residues 69-70 (GG), Arg-91, and Asn-191.

The protein belongs to the acetylglutamate kinase family. ArgB subfamily.

Its subcellular location is the cytoplasm. The enzyme catalyses N-acetyl-L-glutamate + ATP = N-acetyl-L-glutamyl 5-phosphate + ADP. It participates in amino-acid biosynthesis; L-arginine biosynthesis; N(2)-acetyl-L-ornithine from L-glutamate: step 2/4. Functionally, catalyzes the ATP-dependent phosphorylation of N-acetyl-L-glutamate. In Streptomyces griseus subsp. griseus (strain JCM 4626 / CBS 651.72 / NBRC 13350 / KCC S-0626 / ISP 5235), this protein is Acetylglutamate kinase.